Reading from the N-terminus, the 135-residue chain is C-type lectin LmsL (135 aa).

Disulfide bonds link cysteine 3/cysteine 14, cysteine 31/cysteine 131, cysteine 38/cysteine 133, and cysteine 106/cysteine 123. A C-type lectin domain is found at 10 to 132 (MNGLCYKIFD…CESKNAFLCQ (123 aa)). Ca(2+) contacts are provided by glutamine 96, aspartate 98, glutamate 104, asparagine 119, and aspartate 120. The Galactose-binding signature appears at 96-98 (QPD).

Belongs to the true venom lectin family. As to quaternary structure, homodimer; disulfide-linked. In terms of tissue distribution, expressed by the venom gland.

The protein resides in the secreted. Its function is as follows. Galactose-binding protein which recognizes specific carbohydrate structures and agglutinates a variety of animal cells by binding to cell-surface glycoproteins and glycolipids. Is a calcium-dependent lectin. Shows high hemagglutinating activity, that is inhibited by lactose, galactose and inositol. The sequence is that of C-type lectin LmsL from Lachesis stenophrys (Central American bushmaster).